A 134-amino-acid polypeptide reads, in one-letter code: Small ribosomal subunit protein bS16 (134 aa).

A disordered region spans residues L81–S134. The segment covering K91–E101 has biased composition (basic and acidic residues). Over residues A116–S134 the composition is skewed to low complexity.

Belongs to the bacterial ribosomal protein bS16 family.

The polypeptide is Small ribosomal subunit protein bS16 (Chelativorans sp. (strain BNC1)).